The following is a 106-amino-acid chain: Large ribosomal subunit protein bL21 (106 aa).

This sequence belongs to the bacterial ribosomal protein bL21 family. As to quaternary structure, part of the 50S ribosomal subunit. Contacts protein L20.

Functionally, this protein binds to 23S rRNA in the presence of protein L20. The protein is Large ribosomal subunit protein bL21 of Syntrophobacter fumaroxidans (strain DSM 10017 / MPOB).